We begin with the raw amino-acid sequence, 943 residues long: Protein translocase subunit SecA (943 aa).

ATP-binding positions include Gln-90, 108–112 (GEGKT), and Asp-509. A disordered region spans residues 534–561 (KPDNEHKPPIPQQRNSKSGGGFSANVDS).

Belongs to the SecA family. Monomer and homodimer. Part of the essential Sec protein translocation apparatus which comprises SecA, SecYEG and auxiliary proteins SecDF. Other proteins may also be involved.

Its subcellular location is the cell inner membrane. The protein resides in the cellular thylakoid membrane. It localises to the cytoplasm. The enzyme catalyses ATP + H2O + cellular proteinSide 1 = ADP + phosphate + cellular proteinSide 2.. Functionally, part of the Sec protein translocase complex. Interacts with the SecYEG preprotein conducting channel. Has a central role in coupling the hydrolysis of ATP to the transfer of proteins into and across the cell membrane, serving as an ATP-driven molecular motor driving the stepwise translocation of polypeptide chains across the membrane. Its function is as follows. Probably participates in protein translocation into and across both the cytoplasmic and thylakoid membranes in cyanobacterial cells. The polypeptide is Protein translocase subunit SecA (Prochlorococcus marinus subsp. pastoris (strain CCMP1986 / NIES-2087 / MED4)).